Here is a 211-residue protein sequence, read N- to C-terminus: Mitotic spindle assembly checkpoint protein MAD2B (211 aa).

The region spanning 13–203 is the HORMA domain; the sequence is QVVADVLSEF…SDILKMQLYV (191 aa).

In terms of assembly, homooligomer. Interacts with REV1. Interacts with FZR1 (in complex with the anaphase promoting complex APC). May interact with CDC20. Heterodimer with REV3L. This dimer forms the minimal DNA polymerase zeta complex (Pol-zeta2), with REV3L bearing DNA polymerase catalytic activity, although its activity is very low in this context. Component of the tetrameric Pol-zeta complex (Pol-zeta4), which consists of REV3L, MAD2L2, POLD2 and POLD3; Pol-zeta4 is the fully active form of DNA polymerase zeta. Component of the shieldin complex, consisting of SHLD1, SHLD2, SHLD3 and MAD2L2/REV7. Within the complex, SHLD2 forms a scaffold which interacts with a SHLD3-MAD2L2 subcomplex via its N-terminus, and with SHLD1 via its C-terminus.

The protein localises to the nucleus. Its subcellular location is the cytoplasm. The protein resides in the cytoskeleton. It is found in the spindle. It localises to the chromosome. Adapter protein able to interact with different proteins and involved in different biological processes. Mediates the interaction between the error-prone DNA polymerase zeta catalytic subunit REV3L and the inserter polymerase REV1, thereby mediating the second polymerase switching in translesion DNA synthesis. Translesion DNA synthesis releases the replication blockade of replicative polymerases, stalled in presence of DNA lesions. May also play a role in signal transduction in response to DNA damage. May regulate the activation of the anaphase promoting complex APC thereby regulating progression through the cell cycle. Component of the shieldin complex, which plays an important role in repair of DNA double-stranded breaks (DSBs). During G1 and S phase of the cell cycle, the complex functions downstream of TP53BP1 to promote non-homologous end joining (NHEJ) and suppress DNA end resection. Through transcriptional regulation may play a role in epithelial-mesenchymal transdifferentiation. This chain is Mitotic spindle assembly checkpoint protein MAD2B (MAD2L2), found in Gallus gallus (Chicken).